A 259-amino-acid polypeptide reads, in one-letter code: Cytosolic Fe-S cluster assembly factor Nubp2 homolog (259 aa).

14–21 (GKGGVGKS) lines the ATP pocket. [4Fe-4S] cluster is bound by residues C188 and C191.

Belongs to the Mrp/NBP35 ATP-binding proteins family. NUBP2/CFD1 subfamily. In terms of assembly, heterotetramer of 2 Nubp1 and 2 Nubp2 chains. [4Fe-4S] cluster serves as cofactor.

Its subcellular location is the cytoplasm. Functionally, component of the cytosolic iron-sulfur (Fe/S) protein assembly (CIA) machinery. Required for maturation of extramitochondrial Fe-S proteins. The Nubp1-Nubp2 heterotetramer forms a Fe-S scaffold complex, mediating the de novo assembly of an Fe-S cluster and its transfer to target apoproteins. This is Cytosolic Fe-S cluster assembly factor Nubp2 homolog from Anopheles gambiae (African malaria mosquito).